We begin with the raw amino-acid sequence, 192 residues long: Ciliary microtubule inner protein 3 (192 aa).

A disordered region spans residues 24–108 (RAGAEGGPSL…SGQKVKAPHR (85 aa)). Basic residues predominate over residues 55 to 64 (APRRPPRPRT).

Belongs to the CIMIP3-like family. As to expression, detected in the sperm flagellum (at protein level).

Its subcellular location is the cytoplasm. The protein resides in the cytoskeleton. It localises to the flagellum axoneme. In Bos taurus (Bovine), this protein is Ciliary microtubule inner protein 3.